A 142-amino-acid chain; its full sequence is MGLSIGSLLICVFLGIVPFATANTNSSSYEEHRNYLLNIFHNPFVNDSIKEKNIPQLIAFYQRYPTDVPLSDADRQQFERFIHDYREYRAVLVDGAPPQGGSFGNIFGHFLGRVGTRYISSLFNKKREERKSNHAYIIEDYN.

Residues methionine 1–alanine 22 form the signal peptide.

It belongs to the Turandot family.

It is found in the secreted. A humoral factor that may play a role in stress tolerance. The sequence is that of Protein Turandot X from Drosophila melanogaster (Fruit fly).